The chain runs to 222 residues: Superoxide dismutase [Mn], mitochondrial (222 aa).

The transit peptide at 1–24 (MLSRAVCGTGRQLAPALGYLGSRQ) directs the protein to the mitochondrion. His50 is a binding site for Mn(2+). Position 58 is a 3'-nitrotyrosine (Tyr58). Lys68 and Lys75 each carry N6-acetyllysine; alternate. An N6-succinyllysine; alternate mark is found at Lys68 and Lys75. A Mn(2+)-binding site is contributed by His98. An N6-acetyllysine modification is found at Lys114. Lys122 and Lys130 each carry N6-acetyllysine; alternate. Lys122 and Lys130 each carry N6-succinyllysine; alternate. Residues Asp183 and His187 each contribute to the Mn(2+) site. Residue Lys202 is modified to N6-acetyllysine.

It belongs to the iron/manganese superoxide dismutase family. Homotetramer. It depends on Mn(2+) as a cofactor. Post-translationally, nitrated under oxidative stress. Nitration coupled with oxidation inhibits the catalytic activity. In terms of processing, acetylation at Lys-122 decreases enzymatic activity. Deacetylated by SIRT3 upon exposure to ionizing radiations or after long fasting. Polyubiquitinated; leading to proteasomal degradation. Deubiquitinated by USP36 which increases protein stability.

The protein localises to the mitochondrion matrix. The catalysed reaction is 2 superoxide + 2 H(+) = H2O2 + O2. Destroys superoxide anion radicals which are normally produced within the cells and which are toxic to biological systems. The sequence is that of Superoxide dismutase [Mn], mitochondrial (SOD2) from Macaca fascicularis (Crab-eating macaque).